The following is a 358-amino-acid chain: Variant-surface-glycoprotein phospholipase C (358 aa).

Residues isoleucine 25–arginine 198 enclose the PI-PLC X-box domain.

As to quaternary structure, monomer. Post-translationally, the N-terminus is blocked.

Its subcellular location is the membrane. It catalyses the reaction a 6-(alpha-D-glucosaminyl)-1-(1,2-diacyl-sn-glycero-3-phospho)-1D-myo-inositol = 6-(alpha-D-glucosaminyl)-1D-myo-inositol 1,2-cyclic phosphate + a 1,2-diacyl-sn-glycerol. By hydrolysis of the attached glycolipid, releases soluble variant surface glycoprotein containing phosphoinositol from the cell wall of T.brucei after cell lysis. It also cleaves similar membrane anchors on some mammalian proteins. VSG lipase may play a role in processes such as parasite differentiation or antigenic variation. The protein is Variant-surface-glycoprotein phospholipase C of Trypanosoma brucei brucei.